Here is a 523-residue protein sequence, read N- to C-terminus: Probable methylmalonate-semialdehyde/malonate-semialdehyde dehydrogenase [acylating], mitochondrial (523 aa).

A mitochondrion-targeting transit peptide spans Met-1–Lys-22. The NAD(+) site is built by Phe-175, Lys-199, and Glu-202. The active-site Nucleophile is Cys-307. Position 407 (Glu-407) interacts with NAD(+).

Belongs to the aldehyde dehydrogenase family. In terms of assembly, homodimer.

The protein resides in the mitochondrion. The catalysed reaction is 2-methyl-3-oxopropanoate + NAD(+) + CoA + H2O = propanoyl-CoA + hydrogencarbonate + NADH + H(+). It catalyses the reaction 3-oxopropanoate + NAD(+) + CoA + H2O = hydrogencarbonate + acetyl-CoA + NADH + H(+). Functionally, probable malonate and methylmalonate semialdehyde dehydrogenase involved in the catabolism of valine, thymine, and compounds catabolized by way of beta-alanine, including uracil and cytidine. The chain is Probable methylmalonate-semialdehyde/malonate-semialdehyde dehydrogenase [acylating], mitochondrial (alh-8) from Caenorhabditis elegans.